The primary structure comprises 450 residues: Phospho-2-dehydro-3-deoxyheptonate aldolase (450 aa).

A compositionally biased stretch (polar residues) spans 1–13; that stretch reads MTVNAKTSPSAGN. Residues 1 to 20 are disordered; it reads MTVNAKTSPSAGNTWRDLPA.

This sequence belongs to the class-II DAHP synthase family. In terms of assembly, homodimer.

It carries out the reaction D-erythrose 4-phosphate + phosphoenolpyruvate + H2O = 7-phospho-2-dehydro-3-deoxy-D-arabino-heptonate + phosphate. It functions in the pathway metabolic intermediate biosynthesis; chorismate biosynthesis; chorismate from D-erythrose 4-phosphate and phosphoenolpyruvate: step 1/7. The polypeptide is Phospho-2-dehydro-3-deoxyheptonate aldolase (aroH) (Streptomyces coelicolor (strain ATCC BAA-471 / A3(2) / M145)).